We begin with the raw amino-acid sequence, 228 residues long: Prolactin (228 aa).

Residues 1-29 form the signal peptide; that stretch reads MCTKRSSLKGSLLLLLLISSLLLSRSVDS. Cysteines 33 and 40 form a disulfide. 3 positions are modified to phosphoserine: S55, S63, and S119. Cystine bridges form between C87-C203 and C220-C228.

This sequence belongs to the somatotropin/prolactin family. As to quaternary structure, interacts with PRLR.

It localises to the secreted. Functionally, prolactin acts primarily on the mammary gland by promoting lactation. This chain is Prolactin (PRL), found in Isoodon macrourus (Short-nosed bandicoot).